The primary structure comprises 90 residues: Small ribosomal subunit protein uS15 (90 aa).

Belongs to the universal ribosomal protein uS15 family. In terms of assembly, part of the 30S ribosomal subunit. Forms a bridge to the 50S subunit in the 70S ribosome, contacting the 23S rRNA.

In terms of biological role, one of the primary rRNA binding proteins, it binds directly to 16S rRNA where it helps nucleate assembly of the platform of the 30S subunit by binding and bridging several RNA helices of the 16S rRNA. Forms an intersubunit bridge (bridge B4) with the 23S rRNA of the 50S subunit in the ribosome. This is Small ribosomal subunit protein uS15 from Mycoplasmoides gallisepticum (strain R(low / passage 15 / clone 2)) (Mycoplasma gallisepticum).